A 69-amino-acid chain; its full sequence is Small ribosomal subunit protein bS21 (69 aa).

Residues 49–69 are disordered; that stretch reads IESAKRKAEKKKRLFSKKDKA.

It belongs to the bacterial ribosomal protein bS21 family.

The protein is Small ribosomal subunit protein bS21 of Leptospira borgpetersenii serovar Hardjo-bovis (strain JB197).